The sequence spans 163 residues: MSQLPLASQATTTDLVSTTAMQPQSEGIVDESLQPQHPPSSTAHDSPCLQDSVPLVPPPPSPYLNKEVGQMVCGSCRILLAYFRGAGYVHCTCCQTMNYVLEAHEVGKVHCGHCATLLMYPFGAPAVKCSLCLFVTEIGERNVRRRLSIEQPTRTNSSGLAEA.

Composition is skewed to polar residues over residues M1–S25 and L33–H44. Positions M1–D51 are disordered. Putative zinc finger regions lie at residues Q70 to V100 and K108 to I138.

It is found in the nucleus. Its function is as follows. Involved in plant growth and disease resistance. This chain is Protein LOL5 (LOL5), found in Oryza sativa subsp. japonica (Rice).